A 170-amino-acid polypeptide reads, in one-letter code: MSNLYESIRKYKCGYIEEILNILDMFDPLLNKFQRNSCYEDMKSELSLFMFNLIDNFPLEKDCFKEDKFIINYIYKSLKNKFIQVNKLHQKVKSYETNIDIIWVNNCDYANLLSTVIFEDIIKDLTQNEKNILRKIYLHGLRESEISRELNISRQAVNKTHLRALEKLKN.

A sigma-70 factor domain-4 region spans residues 122–169; the sequence is IKDLTQNEKNILRKIYLHGLRESEISRELNISRQAVNKTHLRALEKLK. Residues 143–162 constitute a DNA-binding region (H-T-H motif); it reads ESEISRELNISRQAVNKTHL.

It belongs to the sigma-70 factor family.

Its function is as follows. Sigma factors are initiation factors that promote the attachment of RNA polymerase to specific initiation sites and are then released. Transcriptional regulator specifically required to activate expression of the toxin gene locus, composed of tcsL and tcdE/utxA. The sequence is that of RNA polymerase sigma factor TcsR from Paraclostridium sordellii (strain ATCC 9714 / DSM 2141 / JCM 3814 / LMG 15708 / NCIMB 10717 / 211) (Clostridium sordellii).